The chain runs to 448 residues: C4-dicarboxylate transport protein (448 aa).

8 consecutive transmembrane segments (helical) span residues 20 to 38 (LYFQVLVAIIAGIALGHFY), 53 to 75 (IRLVKMIIAPVIFLTVATGIAGM), 88 to 110 (AMIYFLVFSTLALIVGLIVANTV), 161 to 178 (ILQVLFFSVLFGIALGIV), 199 to 220 (LVAILMKAAPIGAFGAMAFTIG), 230 to 252 (LAMLIGTFYITSALFVFVVLGAV), 325 to 347 (LFIAQATGIHLSFGEQILLLLVA), and 362 to 384 (FITLAATLSVVPSVPVAGMALIL).

Belongs to the dicarboxylate/amino acid:cation symporter (DAACS) (TC 2.A.23) family.

It is found in the cell inner membrane. Responsible for the transport of dicarboxylates such as succinate, fumarate, and malate from the periplasm across the membrane. In Agrobacterium fabrum (strain C58 / ATCC 33970) (Agrobacterium tumefaciens (strain C58)), this protein is C4-dicarboxylate transport protein.